The sequence spans 448 residues: Trigger factor (448 aa).

Positions 172–257 (GDRVTVDFVG…MKKIEWPHLP (86 aa)) constitute a PPIase FKBP-type domain.

It belongs to the FKBP-type PPIase family. Tig subfamily.

Its subcellular location is the cytoplasm. It carries out the reaction [protein]-peptidylproline (omega=180) = [protein]-peptidylproline (omega=0). In terms of biological role, involved in protein export. Acts as a chaperone by maintaining the newly synthesized protein in an open conformation. Functions as a peptidyl-prolyl cis-trans isomerase. The sequence is that of Trigger factor from Paraburkholderia xenovorans (strain LB400).